Reading from the N-terminus, the 345-residue chain is Ferritin-like-encapsulin shell fusion protein (345 aa).

The ferritin-like domain stretch occupies residues 1–109 (MLSINPTLIN…INDNKKEESN (109 aa)). Fe cation is bound by residues Glu31, Glu61, and His64. An encapsulin domain region spans residues 110 to 345 (VEYFEKLRSA…KNPEAIVVLE (236 aa)).

This sequence in the N-terminal section; belongs to the ferritin-like superfamily. The protein in the C-terminal section; belongs to the encapsulin family. Family 1 subfamily. As to quaternary structure, 180 monomers assemble into 12 pentamers and 20 hexamers which further assemble into an icosahedral particle about 36.6 nm in diameter. The N-terminal domain (residues 1-99) crystallizes as 3 decamers.

It is found in the encapsulin nanocompartment. The catalysed reaction is 4 Fe(2+) + O2 + 4 H(+) = 4 Fe(3+) + 2 H2O. Its activity is regulated as follows. The ferroxidase activity is inhibited by zinc. Fusion of the shell and cargo protein of a type 1 encapsulin nanocompartment. The nanocompartment is probably involved in iron storage. Expression in E.coli generates spherical particles (PfSPs) about 30 nm in diameter. The purified N-terminus has ferroxidase activity. The protein is Ferritin-like-encapsulin shell fusion protein of Pyrococcus furiosus (strain ATCC 43587 / DSM 3638 / JCM 8422 / Vc1).